Consider the following 236-residue polypeptide: CBS domain-containing protein CBSX1, chloroplastic (236 aa).

The N-terminal 53 residues, 1–53 (MDAVLYSVPLSFTPLRASSSPSSPYLLLPRFLSVQPCHKFTFSRSFPSKSRIP), are a transit peptide targeting the chloroplast. The segment at 47–66 (PSKSRIPSASSAAGSTLMTN) is disordered. Ser-54 is subject to N-acetylserine. CBS domains lie at 81–142 (MTKK…GRTE) and 175–231 (MTPA…IKRS).

Its subcellular location is the plastid. It is found in the chloroplast. The polypeptide is CBS domain-containing protein CBSX1, chloroplastic (CBSX1) (Arabidopsis thaliana (Mouse-ear cress)).